The following is a 179-amino-acid chain: Translation initiation factor IF-3 (179 aa).

Belongs to the IF-3 family. Monomer.

Its subcellular location is the cytoplasm. IF-3 binds to the 30S ribosomal subunit and shifts the equilibrium between 70S ribosomes and their 50S and 30S subunits in favor of the free subunits, thus enhancing the availability of 30S subunits on which protein synthesis initiation begins. The chain is Translation initiation factor IF-3 from Zymomonas mobilis subsp. mobilis (strain ATCC 31821 / ZM4 / CP4).